The primary structure comprises 139 residues: Histone H3 (139 aa).

The disordered stretch occupies residues 1–48 (MARTKSTVIARKVTGGKAPRKQIGSKAARKSAAPSNTSGGVKKPHRYK). K5 bears the N6,N6,N6-trimethyllysine; alternate mark. Position 5 is an N6,N6-dimethyllysine; alternate (K5). Residues K5 and K12 each carry the N6-methyllysine; alternate modification. An N6-acetyllysine; alternate mark is found at K12, K17, K21, K26, K30, and K42. Position 17 is an N6,N6-dimethyllysine; alternate (K17). K21, K26, K30, and K42 each carry N6-methyllysine; alternate. Residues K30 and K42 each carry the N6,N6,N6-trimethyllysine; alternate modification. N6,N6-dimethyllysine; alternate occurs at positions 30 and 42. Residues K62 and K70 each carry the N6-acetyllysine modification. Residue K85 is modified to N6,N6,N6-trimethyllysine; alternate. K85 is modified (N6,N6-dimethyllysine; alternate). At K85 the chain carries N6-methyllysine; alternate.

The protein belongs to the histone H3 family. The nucleosome is a histone octamer containing two molecules each of H2A, H2B, H3 and H4 assembled in one H3-H4 heterotetramer and two H2A-H2B heterodimers. The octamer wraps approximately 147 bp of DNA. Mono-, di- and trimethylated by the COMPASS complex to form H3K4me1/2/3. H3K4me activates gene expression by regulating transcription elongation and plays a role in telomere length maintenance. H3K4me enrichment correlates with transcription levels, and occurs in a 5' to 3' gradient with H3K4me3 enrichment at the 5'-end of genes, shifting to H3K4me2 and then H3K4me1. Methylated by SET2 to form H3K36me. H3K36me represses gene expression. Methylated by DOT1 to form H3K79me. H3K79me is required for association of SIR proteins with telomeric regions and for telomeric silencing. The COMPASS-mediated formation of H3K4me2/3 and the DOT1-mediated formation of H3K79me require H2BK123ub1. Post-translationally, acetylation of histone H3 leads to transcriptional activation. Acetylated by GCN5 to form H3K14ac. H3K14ac can also be formed by ESA1. H3K56ac formation occurs predominantly in newly synthesized H3 molecules during G1, S and G2/M of the cell cycle and may be involved in DNA repair.

It localises to the nucleus. The protein localises to the chromosome. Its function is as follows. Core component of nucleosome. Nucleosomes wrap and compact DNA into chromatin, limiting DNA accessibility to the cellular machineries which require DNA as a template. Histones thereby play a central role in transcription regulation, DNA repair, DNA replication and chromosomal stability. DNA accessibility is regulated via a complex set of post-translational modifications of histones, also called histone code, and nucleosome remodeling. The protein is Histone H3 (HHT1) of Yarrowia lipolytica (strain CLIB 122 / E 150) (Yeast).